The following is a 331-amino-acid chain: GATA transcription factor 12 (331 aa).

Disordered stretches follow at residues 30–49 (ENDV…SSNF) and 105–138 (SGFK…SVPA). Positions 34–47 (VADSTTTTTITDSS) are enriched in low complexity. The segment covering 116-134 (DTGSPENPNSSSPIFTTDV) has biased composition (polar residues). The Nuclear localization signal signature appears at 139–146 (KARSKRSR). The interval 174-218 (SSQQHLSPPTSPPLLMAPLGKKQAVDGGHRRKKDVSSPESGGAEE) is disordered. The segment at 215-269 (GAEERRCLHCATDKTPQWRTGPMGPKTLCNACGVRYKSGRLVPEYRPAASPTFVL) adopts a GATA-type zinc-finger fold.

Belongs to the type IV zinc-finger family. Class A subfamily. Expressed in the vascular cylinder of roots. Expressed in the differentiation zone of the root stele.

It is found in the nucleus. Its function is as follows. Transcriptional activator that specifically binds 5'-GATA-3' or 5'-GAT-3' motifs within gene promoters. May be involved in the regulation of some light-responsive genes. Transcription activator involved in xylem formation. Functions upstream of NAC030/VND7, a master switch of xylem vessel differentiation. This chain is GATA transcription factor 12, found in Arabidopsis thaliana (Mouse-ear cress).